The sequence spans 466 residues: Collagenase 3 (466 aa).

The signal sequence occupies residues 1–13 (ATFFLLSWTHCWS). The propeptide at 14-98 (LPLPYGDDDD…PRCGVPDVGV (85 aa)) is activation peptide. The Cysteine switch motif lies at 89-96 (PRCGVPDV). Cys-91 contacts Zn(2+). Asn-112 carries an N-linked (GlcNAc...) asparagine glycan. A Ca(2+)-binding site is contributed by Asp-123. Asn-147 carries an N-linked (GlcNAc...) asparagine glycan. Residue Asp-157 participates in Ca(2+) binding. Residues His-167 and Asp-169 each contribute to the Zn(2+) site. Positions 171–241 (YPFDGPSGLL…GALMFPIYTY (71 aa)) are interaction with TIMP2. Ca(2+) contacts are provided by Asp-174, Gly-175, Ser-177, and Leu-179. His-182 is a binding site for Zn(2+). Ca(2+) contacts are provided by Asn-189, Gly-191, and Asp-193. His-195 contributes to the Zn(2+) binding site. Positions 197, 198, and 200 each coordinate Ca(2+). His-217 is a binding site for Zn(2+). Glu-218 is an active-site residue. His-221, His-227, and Met-235 together coordinate Zn(2+). A disordered region spans residues 258 to 279 (QSLYGPGDEDPNPKHPKTPEKC). The tract at residues 263 to 466 (PGDEDPNPKH…VMPTNSLLWC (204 aa)) is interaction with collagen. The segment covering 268–279 (PNPKHPKTPEKC) has biased composition (basic and acidic residues). Hemopexin repeat units follow at residues 276–325 (PEKC…WPEL), 326–372 (PNHV…GFPK), 374–422 (VKRL…FPGI), and 423–466 (GDKV…LLWC). The cysteines at positions 279 and 466 are disulfide-linked. Asp-286, Ile-288, Asp-330, and Ala-332 together coordinate Ca(2+). Residue Tyr-361 is modified to Phosphotyrosine; by PKDCC. Residues Ser-378 and Ala-380 each contribute to the Ca(2+) site. N-linked (GlcNAc...) asparagine glycosylation is present at Asn-404. 2 residues coordinate Ca(2+): Asp-427 and Val-429.

Belongs to the peptidase M10A family. It depends on Ca(2+) as a cofactor. Requires Zn(2+) as cofactor. The proenzyme is activated by removal of the propeptide; this cleavage can be effected by other matrix metalloproteinases, such as MMP2, MMP3 and MMP14 and may involve several cleavage steps. Cleavage can also be autocatalytic, after partial maturation by another protease or after treatment with 4-aminophenylmercuric acetate (APMA) (in vitro). Post-translationally, N-glycosylated. In terms of processing, tyrosine phosphorylated by PKDCC/VLK.

Its subcellular location is the secreted. It localises to the extracellular space. The protein localises to the extracellular matrix. Functionally, plays a role in the degradation of extracellular matrix proteins including fibrillar collagen, fibronectin, TNC and ACAN. Cleaves triple helical collagens, including type I, type II and type III collagen, but has the highest activity with soluble type II collagen. Can also degrade collagen type IV, type XIV and type X. May also function by activating or degrading key regulatory proteins, such as TGFB1 and CCN2. Plays a role in wound healing, tissue remodeling, cartilage degradation, bone development, bone mineralization and ossification. Required for normal embryonic bone development and ossification. Plays a role in the healing of bone fractures via endochondral ossification. Plays a role in wound healing, probably by a mechanism that involves proteolytic activation of TGFB1 and degradation of CCN2. Plays a role in keratinocyte migration during wound healing. May play a role in cell migration and in tumor cell invasion. The chain is Collagenase 3 (Mmp13) from Rattus norvegicus (Rat).